The sequence spans 214 residues: Cell division protein SepF (214 aa).

A disordered region spans residues 23-70 (YYDDRAPSRGFPRPRFDDGYGRYDGDDYDDPRREPADYPPPAGYRGGY). Residues 36–58 (PRFDDGYGRYDGDDYDDPRREPA) are compositionally biased toward basic and acidic residues.

Belongs to the SepF family. Homodimer. Interacts with FtsZ.

It localises to the cytoplasm. Functionally, cell division protein that is part of the divisome complex and is recruited early to the Z-ring. Probably stimulates Z-ring formation, perhaps through the cross-linking of FtsZ protofilaments. Its function overlaps with FtsA. The sequence is that of Cell division protein SepF from Mycobacterium avium (strain 104).